The primary structure comprises 358 residues: NADH-quinone oxidoreductase subunit H (358 aa).

Helical transmembrane passes span 30–50, 96–116, 129–149, 165–185, 201–221, 264–284, 297–317, and 336–356; these read IVIG…MIFM, FLYN…FSCL, VGIF…LLAG, GAQM…IVIL, GWFL…YLIA, LFII…PLHI, IPGF…LMWI, and YLVP…VFKL.

This sequence belongs to the complex I subunit 1 family. In terms of assembly, NDH-1 is composed of 14 different subunits. Subunits NuoA, H, J, K, L, M, N constitute the membrane sector of the complex.

It localises to the cell inner membrane. The enzyme catalyses a quinone + NADH + 5 H(+)(in) = a quinol + NAD(+) + 4 H(+)(out). Its function is as follows. NDH-1 shuttles electrons from NADH, via FMN and iron-sulfur (Fe-S) centers, to quinones in the respiratory chain. The immediate electron acceptor for the enzyme in this species is believed to be ubiquinone. Couples the redox reaction to proton translocation (for every two electrons transferred, four hydrogen ions are translocated across the cytoplasmic membrane), and thus conserves the redox energy in a proton gradient. This subunit may bind ubiquinone. The sequence is that of NADH-quinone oxidoreductase subunit H from Phocaeicola vulgatus (strain ATCC 8482 / DSM 1447 / JCM 5826 / CCUG 4940 / NBRC 14291 / NCTC 11154) (Bacteroides vulgatus).